The chain runs to 252 residues: Phosphate import ATP-binding protein PstB 2 (252 aa).

An ABC transporter domain is found at 6–247; sequence ISINDLSVYF…PQHKETEDYI (242 aa). An ATP-binding site is contributed by 38–45; sequence GPSGSGKS.

The protein belongs to the ABC transporter superfamily. Phosphate importer (TC 3.A.1.7) family. In terms of assembly, the complex is composed of two ATP-binding proteins (PstB), two transmembrane proteins (PstC and PstA) and a solute-binding protein (PstS).

Its subcellular location is the cell membrane. The catalysed reaction is phosphate(out) + ATP + H2O = ADP + 2 phosphate(in) + H(+). Its function is as follows. Part of the ABC transporter complex PstSACB involved in phosphate import. Responsible for energy coupling to the transport system. This chain is Phosphate import ATP-binding protein PstB 2, found in Streptococcus thermophilus (strain CNRZ 1066).